Consider the following 20-residue polypeptide: Unknown protein NF003 from 2D-PAGE (20 aa).

This is Unknown protein NF003 from 2D-PAGE from Naegleria fowleri (Brain eating amoeba).